Consider the following 117-residue polypeptide: MIYGIGIDLIEIGRIKTLMERQKKLPERILSKDELTKFESFSHEQRRAEFLAGRFACKEAFSKALGTGLGKHVSFQDINCQNDELGRPYIRYEGFKVHVSITHTENYAASQVILEKM.

Mg(2+)-binding residues include Asp-8 and Glu-59.

This sequence belongs to the P-Pant transferase superfamily. AcpS family. The cofactor is Mg(2+).

It localises to the cytoplasm. It carries out the reaction apo-[ACP] + CoA = holo-[ACP] + adenosine 3',5'-bisphosphate + H(+). In terms of biological role, transfers the 4'-phosphopantetheine moiety from coenzyme A to a Ser of acyl-carrier-protein. This chain is Holo-[acyl-carrier-protein] synthase, found in Staphylococcus carnosus (strain TM300).